The sequence spans 155 residues: Large ribosomal subunit protein eL24 (155 aa).

The disordered stretch occupies residues 92–155 (AKRNMKPEVR…KAAPRVGGKR (64 aa)). Over residues 96–117 (MKPEVRKAQREQAIKQAKEQKK) the composition is skewed to basic and acidic residues. The segment covering 124-133 (KTTAPPTKGK) has biased composition (low complexity).

This sequence belongs to the eukaryotic ribosomal protein eL24 family.

The sequence is that of Large ribosomal subunit protein eL24 (RpL24) from Plutella xylostella (Diamondback moth).